The sequence spans 423 residues: Gamma-glutamyl phosphate reductase (423 aa).

Belongs to the gamma-glutamyl phosphate reductase family.

Its subcellular location is the cytoplasm. It carries out the reaction L-glutamate 5-semialdehyde + phosphate + NADP(+) = L-glutamyl 5-phosphate + NADPH + H(+). Its pathway is amino-acid biosynthesis; L-proline biosynthesis; L-glutamate 5-semialdehyde from L-glutamate: step 2/2. Functionally, catalyzes the NADPH-dependent reduction of L-glutamate 5-phosphate into L-glutamate 5-semialdehyde and phosphate. The product spontaneously undergoes cyclization to form 1-pyrroline-5-carboxylate. The polypeptide is Gamma-glutamyl phosphate reductase (Paramagnetospirillum magneticum (strain ATCC 700264 / AMB-1) (Magnetospirillum magneticum)).